The sequence spans 195 residues: Pyridoxal 5'-phosphate synthase subunit PdxT (195 aa).

Position 46 to 48 (46 to 48 (GES)) interacts with L-glutamine. C78 acts as the Nucleophile in catalysis. L-glutamine contacts are provided by residues R105 and 133-134 (IR). Residues H169 and E171 each act as charge relay system in the active site.

This sequence belongs to the glutaminase PdxT/SNO family. In the presence of PdxS, forms a dodecamer of heterodimers. Only shows activity in the heterodimer.

The enzyme catalyses aldehydo-D-ribose 5-phosphate + D-glyceraldehyde 3-phosphate + L-glutamine = pyridoxal 5'-phosphate + L-glutamate + phosphate + 3 H2O + H(+). It carries out the reaction L-glutamine + H2O = L-glutamate + NH4(+). It functions in the pathway cofactor biosynthesis; pyridoxal 5'-phosphate biosynthesis. In terms of biological role, catalyzes the hydrolysis of glutamine to glutamate and ammonia as part of the biosynthesis of pyridoxal 5'-phosphate. The resulting ammonia molecule is channeled to the active site of PdxS. This is Pyridoxal 5'-phosphate synthase subunit PdxT from Geobacillus thermodenitrificans (strain NG80-2).